A 513-amino-acid polypeptide reads, in one-letter code: ATP synthase subunit alpha 2 (513 aa).

169–176 (GDRQTGKT) contacts ATP.

Belongs to the ATPase alpha/beta chains family. As to quaternary structure, F-type ATPases have 2 components, CF(1) - the catalytic core - and CF(0) - the membrane proton channel. CF(1) has five subunits: alpha(3), beta(3), gamma(1), delta(1), epsilon(1). CF(0) has three main subunits: a(1), b(2) and c(9-12). The alpha and beta chains form an alternating ring which encloses part of the gamma chain. CF(1) is attached to CF(0) by a central stalk formed by the gamma and epsilon chains, while a peripheral stalk is formed by the delta and b chains.

Its subcellular location is the cell inner membrane. It carries out the reaction ATP + H2O + 4 H(+)(in) = ADP + phosphate + 5 H(+)(out). Functionally, produces ATP from ADP in the presence of a proton gradient across the membrane. The alpha chain is a regulatory subunit. This chain is ATP synthase subunit alpha 2, found in Photobacterium profundum (strain SS9).